A 592-amino-acid polypeptide reads, in one-letter code: MPDARAADEPAQRLPRTGNPATDYALALLAHLIGAGVRDIVVSPGSRSQALALAAAELERAGAVRLHVRLDERVGGFLALGIGRETGAPAAVVTTSGTATANLHPAVLEAHESGVPLIVITADRPPELRGIRSSQTTHQDGLYGVAVRLAKDVPAPSGEEEDVATAARLAVESVRAAVGAETADPGPVHLNLAFREPLSVAVPPLPVVERGALPALAGAQKLGRETVVPGIGPSTVVIAGADAGPEAEEYARSAGFPLLAEVSSGSRFGPNLVVAYRELLREPEFGGRVRRAVVFGHPTLSREVPALLLRDDVETVVVAPRGRQAYNPGRRAVIVGAVRPAVEADPRSPEARAWVGLWVSASRRLVEAAERVASPDATAPDLAKARSLDPSDALAFARMELAAVRAPITRPLLAEALWRHTWPHDRLVLGASRLIRDADRIVPGKRLRVHSNRGLAGIDGTIATAIGVALASQAVAVETGTLPGITRVLLGDLALLHDAGALLGGSGEAWPNVQVIVGNDGGGTIFDGLEVATIASPAAFDRVLYTPQRGDIAALSTAYGWAHRVVRTKGELDQALSAPPAGASVLEVPLER.

It belongs to the TPP enzyme family. MenD subfamily. As to quaternary structure, homodimer. Mg(2+) is required as a cofactor. It depends on Mn(2+) as a cofactor. Thiamine diphosphate serves as cofactor.

The enzyme catalyses isochorismate + 2-oxoglutarate + H(+) = 5-enolpyruvoyl-6-hydroxy-2-succinyl-cyclohex-3-ene-1-carboxylate + CO2. Its pathway is quinol/quinone metabolism; 1,4-dihydroxy-2-naphthoate biosynthesis; 1,4-dihydroxy-2-naphthoate from chorismate: step 2/7. The protein operates within quinol/quinone metabolism; menaquinone biosynthesis. Functionally, catalyzes the thiamine diphosphate-dependent decarboxylation of 2-oxoglutarate and the subsequent addition of the resulting succinic semialdehyde-thiamine pyrophosphate anion to isochorismate to yield 2-succinyl-5-enolpyruvyl-6-hydroxy-3-cyclohexene-1-carboxylate (SEPHCHC). In Leifsonia xyli subsp. xyli (strain CTCB07), this protein is 2-succinyl-5-enolpyruvyl-6-hydroxy-3-cyclohexene-1-carboxylate synthase.